We begin with the raw amino-acid sequence, 388 residues long: MVLPTAPEPPTLLGYHRILSPSAGVRVSPLCLGTMSFGNGWKGVMGECDQATSFNMLDTFYESGGNFIDVANFYQGGDTERWVGEWMAQRQNRDEIVLSTKYTMGYTMFGPQKIKSNFQGNHAKSLRLSVKASLQKLQTDYIDLLYVHMWDFTTSVEEVMRSLNHLVANGKVLYLGVSDTPAWLVVKCNAFARANGLTPFSVYQGHWSSAFRDFERDILPMCESEGMGLAPWGVLGRGQFRSAEEFSREGRKMGPQDEKHRRLGEKLDQMAQQKNTKATSIAQAYVMHKAPYVFPVIGGRKVEHLKENIEALGLVLSEEEIREIDDAEPFDVGFPMNFLFETPTQSYRTNMTSKDIWQLSCNTRLETVPKQQPIEPLQGAKYFGSASK.

Aspartate 69 contacts NADP(+). The active-site Proton donor is the tyrosine 74. Histidine 148 serves as a coordination point for substrate. NADP(+) contacts are provided by residues 178-179 (SD), glutamine 204, 233-243 (GVLGRGQFRSA), and 300-308 (RKVEHLKEN).

This sequence belongs to the aldo/keto reductase family. Aldo/keto reductase 2 subfamily.

The protein operates within mycotoxin biosynthesis; aflatoxin biosynthesis. Its function is as follows. Norsolorinic acid reductase; part of the gene cluster that mediates the biosynthesis of aflatoxins, a group of polyketide-derived furanocoumarins, and part of the most toxic and carcinogenic compounds among the known mycotoxins. The four major aflatoxins produced by A.parasiticus are aflatoxin B1 (AFB1), aflatoxin B2 (AFB2), aflatoxin G1 (AFG1) and aflatoxin G2 (AFG2). Within the aflatoxin pathway, the norsolorinic acid reductase aflE may play a role in the conversion of norsolorinic acid (NOR) to averantin (AVN). The biosynthesis of aflatoxins begins with the norsolorinic acid synthase aflC that combines a hexanoyl starter unit produced by the fatty acid synthase aflA/aflB and 7 malonyl-CoA extender units to synthesize the precursor NOR. The second step is the conversion of NOR to averantin and requires the norsolorinic acid ketoreductase aflD, which catalyzes the dehydration of norsolorinic acid to form (1'S)-averantin. The norsolorinic acid reductases aflE and aflF may also play a role in the conversion of NOR to AVN. The cytochrome P450 monooxygenase aflG then catalyzes the hydroxylation of AVN to 5'hydroxyaverantin (HAVN). The next step is performed by the 5'-hydroxyaverantin dehydrogenase aflH that transforms HAVN to 5'-oxoaverantin (OAVN) which is further converted to averufin (AVF) by aflK that plays a dual role in the pathway, as a 5'-oxoaverantin cyclase that mediates conversion of 5'-oxoaverantin, as well as a versicolorin B synthase in a later step in the pathway. The averufin oxidase aflI catalyzes the conversion of AVF to versiconal hemiacetal acetate (VHA). VHA is then the substrate for the versiconal hemiacetal acetate esterase aflJ to yield versiconal (VAL). Versicolorin B synthase aflK then converts VAL to versicolorin B (VERB) by closing the bisfuran ring of aflatoxin which is required for DNA-binding, thus giving to aflatoxin its activity as a mutagen. Then, the activity of the versicolorin B desaturase aflL leads to versicolorin A (VERA). A branch point starts from VERB since it can also be converted to dihydrodemethylsterigmatocystin (DMDHST), probably also by aflL, VERA being a precursor for aflatoxins B1 and G1, and DMDHST for aflatoxins B2 and G2. Next, the versicolorin reductase aflM and the cytochrome P450 monooxygenase aflN are involved in conversion of VERA to demethylsterigmatocystin (DMST). AflX and aflY seem also involved in this step, through probable aflX-mediated epoxide ring-opening step following versicolorin A oxidation and aflY-mediated Baeyer-Villiger oxidation required for the formation of the xanthone ring. The methyltransferase aflO then leads to the modification of DMST to sterigmatocystin (ST), and of DMDHST to dihydrosterigmatocystin (DHST). Both ST and DHST are then substrates of the O-methyltransferase aflP to yield O-methylsterigmatocystin (OMST) and dihydro-O-methylsterigmatocystin (DHOMST), respectively. Finally OMST is converted to aflatoxins B1 and G1, and DHOMST to aflatoxins B2 and G2, via the action of several enzymes including O-methylsterigmatocystin oxidoreductase aflQ, the cytochrome P450 monooxygenase aflU, but also the NADH-dependent flavin oxidoreductase nadA which is specifically required for the synthesis of AFG1. The sequence is that of Norsolorinic acid reductase A from Aspergillus parasiticus (strain ATCC 56775 / NRRL 5862 / SRRC 143 / SU-1).